The chain runs to 311 residues: Cytosolic Fe-S cluster assembly factor Nubp1 homolog (311 aa).

The disordered stretch occupies residues 1-20 (MQAPPPEHCPGVESENAGKG). Residues cysteine 9, cysteine 23, cysteine 26, and cysteine 32 each coordinate [4Fe-4S] cluster. 63–70 (GKGGVGKS) contributes to the ATP binding site. Residues cysteine 240 and cysteine 243 each contribute to the [4Fe-4S] cluster site.

This sequence belongs to the Mrp/NBP35 ATP-binding proteins family. NUBP1/NBP35 subfamily. In terms of assembly, heterotetramer of 2 Nubp1 and 2 Nubp2 chains. The cofactor is [4Fe-4S] cluster.

The protein resides in the cytoplasm. Component of the cytosolic iron-sulfur (Fe/S) protein assembly (CIA) machinery. Required for maturation of extramitochondrial Fe-S proteins. The Nubp1-Nubp2 heterotetramer forms a Fe-S scaffold complex, mediating the de novo assembly of an Fe-S cluster and its transfer to target apoproteins. This Drosophila simulans (Fruit fly) protein is Cytosolic Fe-S cluster assembly factor Nubp1 homolog.